The following is a 251-amino-acid chain: S-acyl fatty acid synthase thioesterase, medium chain (251 aa).

Active-site residues include S90 and H226.

This sequence belongs to the thioesterase family.

It catalyses the reaction (9Z)-octadecenoyl-[ACP] + H2O = (9Z)-octadecenoate + holo-[ACP] + H(+). Functionally, in fatty acid biosynthesis chain termination and release of the free fatty acid product is achieved by hydrolysis of the thio ester by a thioesterase I, a component of the fatty acid synthetase complex. The chain length of the released fatty acid is usually C16. However, in the mammary glands of non-ruminant mammals, and in the uropygial gland of certain waterfowl there exists a second thioesterase which releases medium-chain length fatty acids (C8 to C2). The chain is S-acyl fatty acid synthase thioesterase, medium chain from Anas platyrhynchos (Mallard).